The following is a 530-amino-acid chain: GMP synthase [glutamine-hydrolyzing] (530 aa).

The Glutamine amidotransferase type-1 domain occupies Arg-4–Asp-205. Catalysis depends on Cys-84, which acts as the Nucleophile. Catalysis depends on residues His-179 and Glu-181. The region spanning Trp-206–Arg-398 is the GMPS ATP-PPase domain. Position 233–239 (Ser-233–Ser-239) interacts with ATP.

As to quaternary structure, homodimer.

It catalyses the reaction XMP + L-glutamine + ATP + H2O = GMP + L-glutamate + AMP + diphosphate + 2 H(+). The protein operates within purine metabolism; GMP biosynthesis; GMP from XMP (L-Gln route): step 1/1. In terms of biological role, catalyzes the synthesis of GMP from XMP. This is GMP synthase [glutamine-hydrolyzing] from Bordetella avium (strain 197N).